A 194-amino-acid polypeptide reads, in one-letter code: ATP synthase subunit 5, mitochondrial (194 aa).

F-type ATP synthases have 2 components, the catalytic core F(1) and the membrane-embedded component F(0), linked together by a central stalk and a peripheral stalk. The central stalk, also called rotor shaft, is often seen as part of F(1). The peripheral stalk is seen as part of F(0). F(0) contains the membrane channel next to the rotor. F-type ATP synthases form dimers but each monomer functions independently in ATP generation. The dimer consists of 18 different polypeptides: ATP1 (subunit alpha, part of F(1), 3 molecules per monomer), ATP2 (subunit beta, part of F(1), 3 molecules per monomer), ATP3 (subunit gamma, part of the central stalk), ATP4 (subunit b, part of the peripheral stalk), ATP5/OSCP (subunit 5/OSCP, part of the peripheral stalk), ATP6 (subunit a, part of the peripheral stalk), ATP7 (subunit d, part of the peripheral stalk), ATP8 (subunit 8, part of the peripheral stalk), OLI1 (subunit c, part of the rotor, 10 molecules per monomer), ATP14 (subunit h, part of the peripheral stalk), ATP15 (subunit epsilon, part of the central stalk), ATP16 (subunit delta, part of the central stalk), ATP17 (subunit f, part of the peripheral stalk), ATP18 (subunit i/j, part of the peripheral stalk). Dimer-specific subunits are ATP19 (subunit k, at interface between monomers), ATP20 (subunit g, at interface between monomers), TIM11 (subunit e, at interface between monomers). Also contains subunit L.

It localises to the mitochondrion inner membrane. Functionally, mitochondrial membrane ATP synthase (F(1)F(0) ATP synthase or Complex V) produces ATP from ADP in the presence of a proton gradient across the membrane which is generated by electron transport complexes of the respiratory chain. F-type ATP synthases consist of two structural domains, F(1) - containing the extramembraneous catalytic core, and F(0) - containing the membrane proton channel, linked together by a central stalk and a peripheral stalk. During catalysis, ATP synthesis in the catalytic domain of F(1) is coupled via a rotary mechanism of the central stalk subunits to proton translocation. Part of the complex F(0) domain and the peripheral stalk, which acts as a stator to hold the catalytic alpha/ATP1(3)beta/ATP2(3) subcomplex and subunit a/ATP6 static relative to the rotary elements. The polypeptide is ATP synthase subunit 5, mitochondrial (Pichia angusta (Yeast)).